A 901-amino-acid polypeptide reads, in one-letter code: Core protein VP3 (901 aa).

It belongs to the orbivirus VP3 family.

The protein localises to the virion. Its function is as follows. The VP3 protein is one of the five proteins (with VP1, VP4, VP6 and VP7) which form the inner capsid of the virus. The chain is Core protein VP3 (Segment-3) from Antilocapra americana (Pronghorn).